The sequence spans 349 residues: Soluble TNF receptor II (349 aa).

The first 19 residues, 1–19, serve as a signal peptide directing secretion; the sequence is MKSVLYSYILFLSCIIING. TNFR-Cys repeat units lie at residues 31–65 and 67–108; these read KCKD…NTQC and PCGS…NRIC. Cystine bridges form between Cys-32-Cys-43, Cys-44-Cys-57, Cys-47-Cys-65, Cys-68-Cys-83, Cys-86-Cys-100, and Cys-90-Cys-108. 3 N-linked (GlcNAc...) asparagine; by host glycosylation sites follow: Asn-101, Asn-189, and Asn-248.

This sequence belongs to the orthopoxvirus OPG002 family.

Its function is as follows. Inhibits host immune defense by binding to host TNF and various chemokines in the extracellular space. Binds host CC chemokines (beta chemokines) and CXC chemokines (alpha chemokines). In Camelus, this protein is Soluble TNF receptor II (OPG002).